The chain runs to 438 residues: C4-dicarboxylate transport protein 1 (438 aa).

Transmembrane regions (helical) follow at residues 20–42 (LYVQ…PSVA), 57–77 (LIKM…IAHI), 90–112 (ALFY…GNLV), 160–179 (VLQV…ALGK), 192–214 (AHAV…FGAM), 229–251 (LIGL…LGLI), 324–346 (LFIA…LLVA), and 361–383 (FITL…AIVF).

Belongs to the dicarboxylate/amino acid:cation symporter (DAACS) (TC 2.A.23) family.

It localises to the cell inner membrane. Its function is as follows. Responsible for the transport of dicarboxylates such as succinate, fumarate, and malate from the periplasm across the membrane. The protein is C4-dicarboxylate transport protein 1 of Bradyrhizobium diazoefficiens (strain JCM 10833 / BCRC 13528 / IAM 13628 / NBRC 14792 / USDA 110).